We begin with the raw amino-acid sequence, 475 residues long: Ribulose bisphosphate carboxylase large chain (475 aa).

Positions 1-2 are excised as a propeptide; it reads MS. N-acetylproline is present on P3. K14 bears the N6,N6,N6-trimethyllysine mark. Positions 123 and 173 each coordinate substrate. The active-site Proton acceptor is the K175. Substrate is bound at residue K177. Mg(2+) is bound by residues K201, D203, and E204. K201 is modified (N6-carboxylysine). H294 functions as the Proton acceptor in the catalytic mechanism. Positions 295, 327, and 379 each coordinate substrate.

The protein belongs to the RuBisCO large chain family. Type I subfamily. Heterohexadecamer of 8 large chains and 8 small chains; disulfide-linked. The disulfide link is formed within the large subunit homodimers. Requires Mg(2+) as cofactor. Post-translationally, the disulfide bond which can form in the large chain dimeric partners within the hexadecamer appears to be associated with oxidative stress and protein turnover.

It is found in the plastid. The protein localises to the chloroplast. The catalysed reaction is 2 (2R)-3-phosphoglycerate + 2 H(+) = D-ribulose 1,5-bisphosphate + CO2 + H2O. It carries out the reaction D-ribulose 1,5-bisphosphate + O2 = 2-phosphoglycolate + (2R)-3-phosphoglycerate + 2 H(+). In terms of biological role, ruBisCO catalyzes two reactions: the carboxylation of D-ribulose 1,5-bisphosphate, the primary event in carbon dioxide fixation, as well as the oxidative fragmentation of the pentose substrate in the photorespiration process. Both reactions occur simultaneously and in competition at the same active site. The protein is Ribulose bisphosphate carboxylase large chain of Atriplex rosea (Red orache).